The primary structure comprises 105 residues: Cell division protein FtsL (105 aa).

Residues 1-22 (MIGNERHGLVGVIGADLIRNAK) lie on the Cytoplasmic side of the membrane. Residues 23–43 (IPLILLVAVLISAVLVVTTAH) form a helical membrane-spanning segment. Residues 44-105 (RTRLLTAERE…DPSQENIVIK (62 aa)) lie on the Periplasmic side of the membrane.

Belongs to the FtsL family. Part of a complex composed of FtsB, FtsL and FtsQ.

It is found in the cell inner membrane. Functionally, essential cell division protein. May link together the upstream cell division proteins, which are predominantly cytoplasmic, with the downstream cell division proteins, which are predominantly periplasmic. This chain is Cell division protein FtsL, found in Yersinia pestis.